We begin with the raw amino-acid sequence, 810 residues long: Soluble starch synthase 2-3, chloroplastic/amyloplastic (810 aa).

Residues 1-16 (MSSAVVASSTTFLVAL) constitute a chloroplast transit peptide. Disordered regions lie at residues 43 to 265 (GRAG…PIPA) and 281 to 313 (EPDA…SGPL). The span at 63–83 (RDAGVVRRADDGENEAAVERA) shows a compositional bias: basic and acidic residues. Residues 84 to 93 (GEDDEEEEEF) show a composition bias toward acidic residues. A compositionally biased stretch (basic residues) spans 102–116 (RSRRGGVGKVLKRRG). The segment covering 129–148 (DAARVRGAAAPAPAPTQDAA) has biased composition (low complexity). Residues 281–310 (EPDAAEDGDDDDDWADSDASDSEIDQDDDS) show a composition bias toward acidic residues. Lys-333 is an ADP-alpha-D-glucose binding site.

Belongs to the glycosyltransferase 1 family. Bacterial/plant glycogen synthase subfamily. Expressed most exclusively in endosperm.

The protein localises to the plastid. Its subcellular location is the amyloplast. It is found in the chloroplast. The catalysed reaction is [(1-&gt;4)-alpha-D-glucosyl](n) + ADP-alpha-D-glucose = [(1-&gt;4)-alpha-D-glucosyl](n+1) + ADP + H(+). Its pathway is glycan biosynthesis; starch biosynthesis. Plays an important role during endosperm starch synthesis. Determines the type of amylopectin structure of starch grain. Synthesizes long B1 amylopectin chains by elongating short A and B1 chains, independently of the other soluble starch synthases. Barely active in japonica subspecies. The sequence is that of Soluble starch synthase 2-3, chloroplastic/amyloplastic (SSII-3) from Oryza sativa subsp. indica (Rice).